A 459-amino-acid chain; its full sequence is Transcription factor AP-2-beta (459 aa).

Residue Lys-21 forms a Glycyl lysine isopeptide (Lys-Gly) (interchain with G-Cter in SUMO) linkage. The segment at 30–139 is disordered; sequence HDGVPSHSSR…PQLSGLDPRR (110 aa). Positions 35–51 are enriched in polar residues; sequence SHSSRLSQLGSVSQGPY. Residues 121 to 132 show a composition bias toward low complexity; the sequence is LLPQPRAALPQL. The residue at position 258 (Ser-258) is a Phosphoserine; by PKA. Residues 299 to 429 form an H-S-H (helix-span-helix), dimerization region; it reads RRKAANVTLL…YLTEALKGMD (131 aa). A disordered region spans residues 435–459; that stretch reads NTTNRHTSGEGPGSKTGDKEEKHRK. Residues 450 to 459 show a composition bias toward basic and acidic residues; it reads TGDKEEKHRK.

Belongs to the AP-2 family. In terms of assembly, binds DNA as a dimer. Can form homodimers or heterodimers with other AP-2 family members. Interacts with CITED4. Interacts with UBE2I. Interacts with KCTD1; this interaction represses transcription activation. Interacts with CITED2 (via C-terminus); the interaction stimulates TFAP2B-transcriptional activity. Sumoylated. Sumoylated on Lys-21; which inhibits transcriptional activity. Localizes to neurons in areas of the cerebral cortex, cerebellum and hypothalamus (at protein level).

Its subcellular location is the nucleus. In terms of biological role, sequence-specific DNA-binding protein that interacts with inducible viral and cellular enhancer elements to regulate transcription of selected genes. AP-2 factors bind to the consensus sequence 5'-GCCNNNGGC-3' and activate genes involved in a large spectrum of important biological functions including proper eye, face, body wall, limb and neural tube development. They also suppress a number of genes including MCAM/MUC18, C/EBP alpha and MYC. AP-2-beta appears to be required for normal face and limb development and for proper terminal differentiation and function of renal tubular epithelia. The sequence is that of Transcription factor AP-2-beta (Tfap2b) from Mus musculus (Mouse).